A 509-amino-acid polypeptide reads, in one-letter code: ATP synthase subunit alpha (509 aa).

169 to 176 contributes to the ATP binding site; it reads GDRQTGKT.

The protein belongs to the ATPase alpha/beta chains family. As to quaternary structure, F-type ATPases have 2 components, CF(1) - the catalytic core - and CF(0) - the membrane proton channel. CF(1) has five subunits: alpha(3), beta(3), gamma(1), delta(1), epsilon(1). CF(0) has four main subunits: a(1), b(1), b'(1) and c(9-12).

Its subcellular location is the cellular chromatophore membrane. The catalysed reaction is ATP + H2O + 4 H(+)(in) = ADP + phosphate + 5 H(+)(out). Produces ATP from ADP in the presence of a proton gradient across the membrane. The alpha chain is a regulatory subunit. In Rhodobacter capsulatus (Rhodopseudomonas capsulata), this protein is ATP synthase subunit alpha.